The following is a 97-amino-acid chain: UstYa family oxidase VicYc (97 aa).

2 short sequence motifs (HXXHC) span residues 11–15 (HELHC) and 38–42 (HANHC).

Belongs to the ustYa family.

Its pathway is mycotoxin biosynthesis. UstYa family oxidase, part of the gene cluster that mediates the biosynthesis of the secondary metabolite victorin, the molecular basis for Victoria blight of oats. The role of vicYc within the pathway has still to be determined. The pathway starts with the processing of the precursor vicA1 by several endopeptidases including kexin proteases as well as the cluster-specific S28 family peptidases vicPa and vicPb to produce 7 identical copies of the hexapeptide Gly-Leu-Lys-Leu-Ala-Phe. After being excised from the precursor peptide, the core peptides are cyclized and modified post-translationally by enzymes encoded within the gene cluster. The ustYa family oxidase vicYb is required for the formation of the macrocycle in victorin and the copper amine oxidases (CAOs) vicK1 and vicK2 are responsible for converting victorin to the active form by oxidizing the N-terminal glycyl residue in the peptides to glyoxylate. Relaxed substrate specificity of enzymes in the victorin biosynthetic pathway results in a metabolic grid that produces a set of analogs including victorinines B, C, E or HV-toxin M. The sequence is that of UstYa family oxidase VicYc from Bipolaris victoriae (strain FI3) (Victoria blight of oats agent).